A 218-amino-acid polypeptide reads, in one-letter code: N-(5'-phosphoribosyl)anthranilate isomerase (218 aa).

Belongs to the TrpF family.

The enzyme catalyses N-(5-phospho-beta-D-ribosyl)anthranilate = 1-(2-carboxyphenylamino)-1-deoxy-D-ribulose 5-phosphate. Its pathway is amino-acid biosynthesis; L-tryptophan biosynthesis; L-tryptophan from chorismate: step 3/5. This Bordetella bronchiseptica (strain ATCC BAA-588 / NCTC 13252 / RB50) (Alcaligenes bronchisepticus) protein is N-(5'-phosphoribosyl)anthranilate isomerase.